The following is a 178-amino-acid chain: UPF0232 protein cgR_0005 (178 aa).

Positions 16 to 55 (AMRRNGSVPDLNKNDAFRRPPAPKGGVEKRKKGRASGLDG) are disordered.

The protein belongs to the UPF0232 family.

This chain is UPF0232 protein cgR_0005, found in Corynebacterium glutamicum (strain R).